The sequence spans 155 residues: Ribosome maturation factor RimP (155 aa).

Belongs to the RimP family.

The protein resides in the cytoplasm. In terms of biological role, required for maturation of 30S ribosomal subunits. The polypeptide is Ribosome maturation factor RimP (Maridesulfovibrio salexigens (strain ATCC 14822 / DSM 2638 / NCIMB 8403 / VKM B-1763) (Desulfovibrio salexigens)).